We begin with the raw amino-acid sequence, 174 residues long: Transcription antitermination protein NusB (174 aa).

A compositionally biased stretch (polar residues) spans 1–11 (MSEVETTNDQT). Residues 1–29 (MSEVETTNDQTPAPKRKDKKPSRSQLRSA) form a disordered region.

This sequence belongs to the NusB family.

Its function is as follows. Involved in transcription antitermination. Required for transcription of ribosomal RNA (rRNA) genes. Binds specifically to the boxA antiterminator sequence of the ribosomal RNA (rrn) operons. The chain is Transcription antitermination protein NusB from Marinomonas sp. (strain MWYL1).